A 743-amino-acid chain; its full sequence is FHF complex subunit HOOK-interacting protein 2B (743 aa).

The disordered stretch occupies residues 186–219 (CGEPTALPKDTTSHGDKDCSHDGAPARPQLDGES). The segment covering 196-206 (TTSHGDKDCSH) has biased composition (basic and acidic residues).

The protein belongs to the FHIP family. In terms of tissue distribution, expressed in liver.

In terms of biological role, able to activate MAPK/ERK and TGFB signaling pathways. May regulate the activity of genes involved in intestinal barrier function and immunoprotective inflammation. May play a role in cell proliferation. The protein is FHF complex subunit HOOK-interacting protein 2B of Homo sapiens (Human).